A 214-amino-acid polypeptide reads, in one-letter code: Osteoclast-stimulating factor 1 (214 aa).

Residues 12 to 71 form the SH3 domain; sequence GQVKVFRALFTFDPRTPDELYFEEGDILYISDTSDTNWWKGTCRGRTGLIPSNYVAEQAE. 3 ANK repeats span residues 72–101, 105–135, and 139–168; these read TIDHPMHEAAKRGNLSWLRECVENKVGING, AGNTALYWACHGGHKDVVELLLNQPSVELNQ, and LGDTVLHAAAWKGYSDIVEMLLDKNARTDI.

Ubiquitously expressed.

It localises to the cytoplasm. Its function is as follows. Induces bone resorption, acting probably through a signaling cascade which results in the secretion of factor(s) enhancing osteoclast formation and activity. In Monopterus albus (Swamp eel), this protein is Osteoclast-stimulating factor 1 (ostf1).